Reading from the N-terminus, the 467-residue chain is A-type ATP synthase subunit B (467 aa).

It belongs to the ATPase alpha/beta chains family. In terms of assembly, has multiple subunits with at least A(3), B(3), C, D, E, F, H, I and proteolipid K(x).

It is found in the cell membrane. Component of the A-type ATP synthase that produces ATP from ADP in the presence of a proton gradient across the membrane. The B chain is a regulatory subunit. This Methanosphaera stadtmanae (strain ATCC 43021 / DSM 3091 / JCM 11832 / MCB-3) protein is A-type ATP synthase subunit B.